Reading from the N-terminus, the 355-residue chain is Agamous-like MADS-box protein AGL81 (355 aa).

The segment at 1–22 is disordered; the sequence is MAIRSLPSSSRCSSSSSSSSYS. The MADS-box domain occupies 26-68; that stretch reads TSLSNRLETIFKKASELCTLCDIEACVIYYGPDGELKTWPPER. Basic and acidic residues predominate over residues 162–174; that stretch reads VESQKHKETKPDH. A disordered region spans residues 162–186; the sequence is VESQKHKETKPDHQSLASSSLNHQT. The span at 176 to 186 shows a compositional bias: polar residues; the sequence is SLASSSLNHQT.

As to quaternary structure, interacts with MEE14/CBP1.

It is found in the nucleus. Its function is as follows. Probable transcription factor that may function in the maintenance of the proper function of the central cell in pollen tube attraction. This chain is Agamous-like MADS-box protein AGL81, found in Arabidopsis thaliana (Mouse-ear cress).